Reading from the N-terminus, the 141-residue chain is uncharacterized protein (141 aa).

It localises to the mitochondrion. This is an uncharacterized protein from Arabidopsis thaliana (Mouse-ear cress).